Here is a 466-residue protein sequence, read N- to C-terminus: Methylenetetrahydrofolate--tRNA-(uracil-5-)-methyltransferase TrmFO (466 aa).

Residue 14 to 19 coordinates FAD; the sequence is GGGLAG.

It belongs to the MnmG family. TrmFO subfamily. FAD is required as a cofactor.

It is found in the cytoplasm. It catalyses the reaction uridine(54) in tRNA + (6R)-5,10-methylene-5,6,7,8-tetrahydrofolate + NADH + H(+) = 5-methyluridine(54) in tRNA + (6S)-5,6,7,8-tetrahydrofolate + NAD(+). The catalysed reaction is uridine(54) in tRNA + (6R)-5,10-methylene-5,6,7,8-tetrahydrofolate + NADPH + H(+) = 5-methyluridine(54) in tRNA + (6S)-5,6,7,8-tetrahydrofolate + NADP(+). Catalyzes the folate-dependent formation of 5-methyl-uridine at position 54 (M-5-U54) in all tRNAs. The chain is Methylenetetrahydrofolate--tRNA-(uracil-5-)-methyltransferase TrmFO from Brucella abortus (strain 2308).